Consider the following 189-residue polypeptide: uncharacterized protein (189 aa).

A signal peptide spans 1-23 (MVPPKPALWALLLALLGTAPSRA). Residue Asn-72 is glycosylated (N-linked (GlcNAc...) asparagine).

This is an uncharacterized protein from Homo sapiens (Human).